Here is a 150-residue protein sequence, read N- to C-terminus: Ribonuclease K6 (150 aa).

Residues 1–23 (MVLCFPLLLLLLVLWGQVCPLHA) form the signal peptide. The Proton acceptor role is filled by His38. 4 disulfide bridges follow: Cys46–Cys104, Cys60–Cys114, Cys78–Cys129, and Cys85–Cys92. N-linked (GlcNAc...) asparagine glycosylation occurs at Asn55. Residues 61–65 (KPQNT) and Lys86 contribute to the substrate site. A glycan (N-linked (GlcNAc...) asparagine) is linked at Asn100. Arg105 serves as a coordination point for substrate. The active-site Proton donor is the His145.

The protein belongs to the pancreatic ribonuclease family. As to quaternary structure, interacts (via N-terminus) with bacterial lipopolysaccharide (LPS).

It is found in the secreted. Its subcellular location is the lysosome. It localises to the cytoplasmic granule. Functionally, ribonuclease which shows a preference for the pyrimidines uridine and cytosine. Has potent antibacterial activity against a range of Gram-positive and Gram-negative bacteria, including P.aeruginosa, A.baumanii, M.luteus, S.aureus, E.faecalis, E.faecium, S.saprophyticus and E.coli. Causes loss of bacterial membrane integrity, and also promotes agglutination of Gram-negative bacteria. Probably contributes to urinary tract sterility. Bactericidal activity is independent of RNase activity. The chain is Ribonuclease K6 (RNASE6) from Saimiri sciureus (Common squirrel monkey).